Here is a 360-residue protein sequence, read N- to C-terminus: U7 snRNA-associated Sm-like protein LSm11 (360 aa).

Residues 1 to 29 (MEERERGARSAGAGSPARPPSPRLDVSSD) form a disordered region. 2 positions are modified to phosphoserine: S15 and S21. An Omega-N-methylarginine modification is found at R41. Residues 68 to 143 (RGGGRGRGRA…PGRSRKAPRN (76 aa)) form a disordered region. Positions 78–94 (RGAAAGSGVPAAPGPSG) are enriched in low complexity. K120 participates in a covalent cross-link: Glycyl lysine isopeptide (Lys-Gly) (interchain with G-Cter in SUMO2). S154 is subject to Phosphoserine. Residues 154 to 229 (SPLGELHRCI…LTLTRLFDRL (76 aa)) form the Sm domain. Residues 171–204 (VHIRTFKGLRGVCTGFLVAFDKFWNMALTDVDET) form an SM 1 region. A disordered region spans residues 268–333 (ADTGRGSHKR…SRKKKRKPKV (66 aa)). S280 is subject to Phosphoserine. The span at 299–322 (GRTTRTDGSSVGGTFSRATTLSRG) shows a compositional bias: polar residues. Residues 343 to 356 (INQIFIRGENVLLV) form an SM 2 region.

The protein belongs to the snRNP Sm proteins family. Component of the heptameric ring U7 snRNP complex, or U7 Sm protein core complex, at least composed of LSM10, LSM11, SNRPB, SNRPD3, SNRPE, SNRPF, SNRPG and U7 snRNA. Formation of the U7 snRNP is an ATP-dependent process mediated by a specialized SMN complex containing at least the Sm protein core complex and additionally, the U7-specific LSM10 and LSM11 proteins. Identified in a histone pre-mRNA complex, at least composed of ERI1, LSM11, SLBP, SNRPB, SYNCRIP and YBX1. Interacts (via the Sm domains) with CLNS1A. Interacts with SMN and ZNF473. Interacts with PRMT5 and WDR77.

Its subcellular location is the nucleus. Its function is as follows. Component of the U7 snRNP complex that is involved in the histone 3'-end pre-mRNA processing. Increases U7 snRNA levels but not histone 3'-end pre-mRNA processing activity, when overexpressed. Required for cell cycle progression from G1 to S phases. Binds specifically to the Sm-binding site of U7 snRNA. The chain is U7 snRNA-associated Sm-like protein LSm11 from Homo sapiens (Human).